A 142-amino-acid polypeptide reads, in one-letter code: Hemoglobin subunit beta (142 aa).

One can recognise a Globin domain in the interval 3-142 (KLSEDQEHYI…VAEALSSNYH (140 aa)). Heme b is bound by residues His60 and His89.

Belongs to the globin family. Heterotetramer of two alpha chains and two beta chains. As to expression, red blood cells.

Functionally, involved in oxygen transport from gills to the various peripheral tissues. This chain is Hemoglobin subunit beta (HBB), found in Hemitrygon akajei (Red stingray).